The sequence spans 363 residues: Aspartate-semialdehyde dehydrogenase (363 aa).

Positions 15, 16, 17, 18, 40, 43, and 87 each coordinate NADP(+). C154 (acyl-thioester intermediate) is an active-site residue. Position 186 (G186) interacts with NADP(+). Residue H251 is the Proton acceptor of the active site. N341 serves as a coordination point for NADP(+).

This sequence belongs to the aspartate-semialdehyde dehydrogenase family. As to quaternary structure, homotetramer; dimer of dimers.

Its subcellular location is the cytoplasm. The protein resides in the cytosol. It localises to the nucleus. The enzyme catalyses L-aspartate 4-semialdehyde + phosphate + NADP(+) = 4-phospho-L-aspartate + NADPH + H(+). It functions in the pathway amino-acid biosynthesis; L-methionine biosynthesis via de novo pathway; L-homoserine from L-aspartate: step 2/3. Its pathway is amino-acid biosynthesis; L-threonine biosynthesis; L-threonine from L-aspartate: step 2/5. Its activity is regulated as follows. Inhibited by 4-amino-3-hydroxynaphthalene-1-sulfonic acid and the competitive inhibitor 1,4-benzoquinone and derivates such as 2-chloro-3-methoxy-1,4-naphthoquinone, 2,3-dichloro-1,4-naphthoquinone, 2-chloro-1,4-naphthoquinone, 2-bromo-1,4-naphthoquinone and 2,3-dichloro-5,8-dihydroxy-1,4-naphthoquinone. Catalyzes the NADPH-dependent formation of L-aspartate 4-semialdehyde (L-ASA) by the reductive dephosphorylation of 4-phospho-L-aspartate. Mediates the second step in the biosynthesis of amino acids that derive from aspartate (the aspartate family of amino acids), including methioinine and threonine, the latter of which is a precursor to isoleucine. This Aspergillus fumigatus (strain ATCC MYA-4609 / CBS 101355 / FGSC A1100 / Af293) (Neosartorya fumigata) protein is Aspartate-semialdehyde dehydrogenase.